The primary structure comprises 163 residues: Nucleotide-binding protein all4662 (163 aa).

It belongs to the YajQ family.

Its function is as follows. Nucleotide-binding protein. The polypeptide is Nucleotide-binding protein all4662 (Nostoc sp. (strain PCC 7120 / SAG 25.82 / UTEX 2576)).